The sequence spans 434 residues: Glutamate-1-semialdehyde 2,1-aminomutase 1 (434 aa).

Lys-270 carries the post-translational modification N6-(pyridoxal phosphate)lysine.

Belongs to the class-III pyridoxal-phosphate-dependent aminotransferase family. HemL subfamily. As to quaternary structure, homodimer. Requires pyridoxal 5'-phosphate as cofactor.

Its subcellular location is the cytoplasm. The catalysed reaction is (S)-4-amino-5-oxopentanoate = 5-aminolevulinate. It functions in the pathway porphyrin-containing compound metabolism; protoporphyrin-IX biosynthesis; 5-aminolevulinate from L-glutamyl-tRNA(Glu): step 2/2. In Bacillus anthracis (strain CDC 684 / NRRL 3495), this protein is Glutamate-1-semialdehyde 2,1-aminomutase 1.